Here is a 176-residue protein sequence, read N- to C-terminus: MIKTVQDLINERIAVGKVVNTHGLKGEVKFFPYTNSEEIVKNLSSVVLYNREKKVFYNLSVESVRRMNKLFLIKFETIDTVEAAEKIKGCEVFIKYEELPPLQNDEYYFYEILGCEVYYESGECVGKVVDIIETGSNDVLVVKKKNRETLIPMIKDCVVEIKKPEKKIVVKELEWI.

The PRC barrel domain maps to 103-176; that stretch reads QNDEYYFYEI…KIVVKELEWI (74 aa).

The protein belongs to the RimM family. Binds ribosomal protein uS19.

The protein localises to the cytoplasm. Its function is as follows. An accessory protein needed during the final step in the assembly of 30S ribosomal subunit, possibly for assembly of the head region. Essential for efficient processing of 16S rRNA. May be needed both before and after RbfA during the maturation of 16S rRNA. It has affinity for free ribosomal 30S subunits but not for 70S ribosomes. This Thermotoga neapolitana (strain ATCC 49049 / DSM 4359 / NBRC 107923 / NS-E) protein is Ribosome maturation factor RimM.